The primary structure comprises 544 residues: MVAKNIKYNEEARKKIQKGVKTLAEAVKVTLGPKGRHVVIDKSFGSPQVTKDGVTVAKEVELADKHENMGAQMVKEVASKTADKAGDGTTTATVLAEAIYTEGLRNVTAGANPMDLKRGIDKAVKVVVDQIKKISKPVQHHKEIAQVATISANNDAEIGNLIAEAMEKVGKNGSITVEEAKGFETVLDVVEGMNFNRGYLSSYFATNPETQECVLEDALVLIYDKKISGIKDFLPVLQQVAESGRPLLIIAEDIEGEALATLVVNRIRGGFRVCAVKAPGFGDRRKAMLEDIAILTGGQLISEELGMKLENASLAMLGKAKKVIVSKEDTTIVEGMGEKEALDARCESIKKQIEDSTSDYDKEKLQERLAKLSGGVAVIRVGAATEIEMKEKKDRVDDAQHATIAAVEEGILPGGGTALIRCIPTLEAFLPMLTNEDERIGARIVLKALSAPLKQIAANAGKEGAIIFQQVMSRSANEGYDALRDAYTDMIEAGILDPAKVTRSALESAASVAGLLLTTEALIAEIPEEKPAAAPAMPGAGMDY.

Residues 30–33, Lys-51, 87–91, Gly-415, 481–483, and Asp-497 contribute to the ATP site; these read TLGP, DGTTT, and DAL.

This sequence belongs to the chaperonin (HSP60) family. Forms a cylinder of 14 subunits composed of two heptameric rings stacked back-to-back. Interacts with the co-chaperonin GroES.

It localises to the cytoplasm. The catalysed reaction is ATP + H2O + a folded polypeptide = ADP + phosphate + an unfolded polypeptide.. Its function is as follows. Together with its co-chaperonin GroES, plays an essential role in assisting protein folding. The GroEL-GroES system forms a nano-cage that allows encapsulation of the non-native substrate proteins and provides a physical environment optimized to promote and accelerate protein folding. This chain is Chaperonin GroEL, found in Chlamydia muridarum (strain MoPn / Nigg).